The sequence spans 95 residues: Co-chaperonin GroES (95 aa).

It belongs to the GroES chaperonin family. As to quaternary structure, heptamer of 7 subunits arranged in a ring. Interacts with the chaperonin GroEL.

Its subcellular location is the cytoplasm. Together with the chaperonin GroEL, plays an essential role in assisting protein folding. The GroEL-GroES system forms a nano-cage that allows encapsulation of the non-native substrate proteins and provides a physical environment optimized to promote and accelerate protein folding. GroES binds to the apical surface of the GroEL ring, thereby capping the opening of the GroEL channel. This is Co-chaperonin GroES from Francisella tularensis subsp. holarctica (strain FTNF002-00 / FTA).